The chain runs to 241 residues: Uridylate kinase (241 aa).

Residue 15–18 (KLSG) coordinates ATP. The interval 23 to 28 (GTEGFG) is involved in allosteric activation by GTP. Glycine 57 serves as a coordination point for UMP. Glycine 58 and arginine 62 together coordinate ATP. Residues aspartate 77 and 138 to 145 (TGNPFFTT) each bind UMP. ATP-binding residues include threonine 165, phenylalanine 171, and aspartate 174.

The protein belongs to the UMP kinase family. Homohexamer.

It is found in the cytoplasm. The catalysed reaction is UMP + ATP = UDP + ADP. It functions in the pathway pyrimidine metabolism; CTP biosynthesis via de novo pathway; UDP from UMP (UMPK route): step 1/1. With respect to regulation, allosterically activated by GTP. Inhibited by UTP. Functionally, catalyzes the reversible phosphorylation of UMP to UDP. The protein is Uridylate kinase of Shigella dysenteriae serotype 1 (strain Sd197).